The following is a 494-amino-acid chain: Guanosine-5'-triphosphate,3'-diphosphate pyrophosphatase (494 aa).

Belongs to the GppA/Ppx family. GppA subfamily.

The catalysed reaction is guanosine 3'-diphosphate 5'-triphosphate + H2O = guanosine 3',5'-bis(diphosphate) + phosphate + H(+). Its pathway is purine metabolism; ppGpp biosynthesis; ppGpp from GTP: step 2/2. Its function is as follows. Catalyzes the conversion of pppGpp to ppGpp. Guanosine pentaphosphate (pppGpp) is a cytoplasmic signaling molecule which together with ppGpp controls the 'stringent response', an adaptive process that allows bacteria to respond to amino acid starvation, resulting in the coordinated regulation of numerous cellular activities. This chain is Guanosine-5'-triphosphate,3'-diphosphate pyrophosphatase, found in Citrobacter koseri (strain ATCC BAA-895 / CDC 4225-83 / SGSC4696).